Consider the following 149-residue polypeptide: MSTNICSFKDRCVSILCCKFCKQVLSSRGMKAVLLADTEIDLFSTDIPPTNAVDFTGRCYFTKICKCKLKDIACLKCGNIVGYHVIVPCSSCLLSCNNGHFWMFHSQAVYDINRLDSTGVNVLLWGNLPEIEESTDEDVLNISAEECIR.

The protein belongs to the FAM72 family. Interacts with UNG. In terms of tissue distribution, may be up-regulated in malignant colon cancers, compared to normal colon and colon adenomas. Expression is also elevated in other common cancer types, including breast, lung, uterus, and ovary.

The protein resides in the cytoplasm. It is found in the mitochondrion. Functionally, may play a role in the regulation of cellular reactive oxygen species metabolism. May participate in cell growth regulation. This Homo sapiens (Human) protein is Protein FAM72A (FAM72A).